The sequence spans 257 residues: Snake venom serine protease KN8 (257 aa).

A signal peptide spans 1–18; sequence MVLIRVLANLLILQLSYA. Positions 19 to 24 are excised as a propeptide; that stretch reads QKSSEL. Residues 25–248 form the Peptidase S1 domain; it reads VVGGLPCNIN…HLDWIKSIIA (224 aa). Intrachain disulfides connect C31/C162, C49/C65, C141/C209, C173/C188, and C199/C224. The active-site Charge relay system is the H64. Residue N102 is glycosylated (N-linked (GlcNAc...) asparagine). D109 serves as the catalytic Charge relay system. Residues N120 and N121 are each glycosylated (N-linked (GlcNAc...) asparagine). The active-site Charge relay system is S203.

It belongs to the peptidase S1 family. Snake venom subfamily. Monomer. Expressed by the venom gland.

Its subcellular location is the secreted. Its function is as follows. Snake venom serine protease that may act in the hemostasis system of the prey. This Trimeresurus stejnegeri (Chinese green tree viper) protein is Snake venom serine protease KN8.